The sequence spans 375 residues: Protein RecA (375 aa).

An ATP-binding site is contributed by Gly88 to Thr95.

This sequence belongs to the RecA family.

It is found in the cytoplasm. Functionally, can catalyze the hydrolysis of ATP in the presence of single-stranded DNA, the ATP-dependent uptake of single-stranded DNA by duplex DNA, and the ATP-dependent hybridization of homologous single-stranded DNAs. It interacts with LexA causing its activation and leading to its autocatalytic cleavage. The chain is Protein RecA from Rhodopirellula baltica (strain DSM 10527 / NCIMB 13988 / SH1).